The following is a 765-amino-acid chain: Probable dehydratase PflD (765 aa).

The PFL domain maps to 3–637 (NRISRLKTAL…VVGATPDGRF (635 aa)). The Glycine radical domain occupies 645-765 (GGLSPMLGQD…DIIRRTAHQL (121 aa)). The residue at position 741 (glycine 741) is a Glycine radical.

The protein belongs to the glycyl radical enzyme (GRE) family.

Its function is as follows. Probably shows dehydratase activity. In Escherichia coli (strain K12), this protein is Probable dehydratase PflD (pflD).